A 332-amino-acid polypeptide reads, in one-letter code: Glycerol-3-phosphate dehydrogenase [NAD(P)+] 2 (332 aa).

NADPH is bound by residues S17, W18, R37, and K112. Residues K112 and G140 each contribute to the sn-glycerol 3-phosphate site. A144 is an NADPH binding site. The sn-glycerol 3-phosphate site is built by K195, D243, S253, R254, and N255. The active-site Proton acceptor is the K195. R254 provides a ligand contact to NADPH. NADPH-binding residues include V278 and E280.

It belongs to the NAD-dependent glycerol-3-phosphate dehydrogenase family.

The protein resides in the cytoplasm. It carries out the reaction sn-glycerol 3-phosphate + NAD(+) = dihydroxyacetone phosphate + NADH + H(+). The enzyme catalyses sn-glycerol 3-phosphate + NADP(+) = dihydroxyacetone phosphate + NADPH + H(+). The protein operates within membrane lipid metabolism; glycerophospholipid metabolism. Its function is as follows. Catalyzes the reduction of the glycolytic intermediate dihydroxyacetone phosphate (DHAP) to sn-glycerol 3-phosphate (G3P), the key precursor for phospholipid synthesis. The chain is Glycerol-3-phosphate dehydrogenase [NAD(P)+] 2 from Mycolicibacterium paratuberculosis (strain ATCC BAA-968 / K-10) (Mycobacterium paratuberculosis).